A 468-amino-acid chain; its full sequence is H(+)/Cl(-) exchange transporter ClcA (468 aa).

Residues 1 to 32 (MIKRERIVKSVLAHVPKDAINQFVSRGSTPTS) are Cytoplasmic-facing. A helical membrane pass occupies residues 33–69 (FSVLFMAAIVGTLAGLVGTYFEIAVHFVSETRTEWLK). The Periplasmic segment spans residues 70–76 (SEIGSVL). The chain crosses the membrane as a helical span at residues 77 to 100 (PLWLAAILISGALAFIGYYLVNRF). The Selectivity filter part_1 signature appears at 106–110 (GSGIP). Residue Ser-107 coordinates chloride. Positions 109-116 (IPEIEGAM) form an intramembrane region, helical. Residues 117 to 123 (DNIRSVR) lie on the Cytoplasmic side of the membrane. Transmembrane regions (helical) follow at residues 124 to 141 (WWRVIPVKFFGGMGALGS) and 148 to 166 (EGPTVQMGGAVGRMVTDIF). The short motif at 146 to 150 (GREGP) is the Selectivity filter part_2 element. Residues 167–176 (RVKDDDTRHS) are Cytoplasmic-facing. Intramembrane regions (helical) lie at residues 177–189 (LLASGAAGGLAAA) and 193–201 (PLAAIMFVV). The Cytoplasmic segment spans residues 202–214 (EEMRPQFRYSLIS). Residues 215-232 (IRAVIISAIMANIVFRAI) form a helical membrane-spanning segment. The Periplasmic portion of the chain corresponds to 233-252 (NGQEAVITMPQYQSPELQSL). Residues 253–281 (WLFLLLGSLFGVFGVVFNKLITIAQDSFV) form a helical membrane-spanning segment. Residues 282-287 (ALHKND) are Cytoplasmic-facing. A helical membrane pass occupies residues 288-309 (RKRYLITGTILGGVFGLLLLYV). Over 310–329 (PQLTGGGIGLIPDITNGNYS) the chain is Periplasmic. The next 2 helical transmembrane spans lie at 330–349 (ISILVMLFVGRVITTLLCFG) and 355–376 (GIFAPMLALGTLFGYAFGASAD). Residues 355 to 359 (GIFAP) carry the Selectivity filter part_3 motif. Residues Ile-356 and Phe-357 each coordinate chloride. Over 377–386 (MLLPSLTIEP) the chain is Periplasmic. The segment at residues 387 to 401 (GVFAIAGMGALFAAT) is an intramembrane region (helical). The note=Loop between two helices intramembrane region spans 402–404 (VRA). The segment at residues 405 to 416 (PITGILLVIEMT) is an intramembrane region (helical). Residues 417–421 (NNYYL) constitute an intramembrane region (note=Loop between two helices). The helical transmembrane segment at 422 to 438 (ILPLIITSLGAVIVAQL) threads the bilayer. The Cytoplasmic segment spans residues 439-468 (LGGQPIYSQLLHRTLKNDKLRQQDLPENQA). Position 445 (Tyr-445) interacts with chloride.

This sequence belongs to the chloride channel (TC 2.A.49) family. ClcA subfamily. In terms of assembly, homodimer.

Its subcellular location is the cell inner membrane. It carries out the reaction 2 chloride(in) + H(+)(out) = 2 chloride(out) + H(+)(in). Proton-coupled chloride transporter. Functions as antiport system and exchanges two chloride ions for 1 proton. Probably acts as an electrical shunt for an outwardly-directed proton pump that is linked to amino acid decarboxylation, as part of the extreme acid resistance (XAR) response. In Vibrio campbellii (strain ATCC BAA-1116), this protein is H(+)/Cl(-) exchange transporter ClcA.